A 178-amino-acid polypeptide reads, in one-letter code: DNA-directed RNA polymerase subunit beta (178 aa).

This sequence belongs to the RNA polymerase beta chain family. The RNAP catalytic core consists of 2 alpha, 1 beta, 1 beta' and 1 omega subunit. When a sigma factor is associated with the core the holoenzyme is formed, which can initiate transcription.

The catalysed reaction is RNA(n) + a ribonucleoside 5'-triphosphate = RNA(n+1) + diphosphate. DNA-dependent RNA polymerase catalyzes the transcription of DNA into RNA using the four ribonucleoside triphosphates as substrates. This chain is DNA-directed RNA polymerase subunit beta (rpoB), found in Liberibacter asiaticus (Citrus greening disease).